The chain runs to 321 residues: Ribose-phosphate pyrophosphokinase (321 aa).

Residues 44–46 (DGE) and 103–104 (RQ) contribute to the ATP site. Mg(2+) contacts are provided by His137 and Asp179. Lys202 is a catalytic residue. D-ribose 5-phosphate is bound by residues Arg204, Asp228, and 232-236 (DTAGT).

It belongs to the ribose-phosphate pyrophosphokinase family. Class I subfamily. As to quaternary structure, homohexamer. It depends on Mg(2+) as a cofactor.

Its subcellular location is the cytoplasm. The enzyme catalyses D-ribose 5-phosphate + ATP = 5-phospho-alpha-D-ribose 1-diphosphate + AMP + H(+). It functions in the pathway metabolic intermediate biosynthesis; 5-phospho-alpha-D-ribose 1-diphosphate biosynthesis; 5-phospho-alpha-D-ribose 1-diphosphate from D-ribose 5-phosphate (route I): step 1/1. In terms of biological role, involved in the biosynthesis of the central metabolite phospho-alpha-D-ribosyl-1-pyrophosphate (PRPP) via the transfer of pyrophosphoryl group from ATP to 1-hydroxyl of ribose-5-phosphate (Rib-5-P). The chain is Ribose-phosphate pyrophosphokinase from Staphylococcus aureus (strain COL).